A 564-amino-acid polypeptide reads, in one-letter code: Keratin, type II cytoskeletal 6B (564 aa).

Residues 1–11 (MASTSTTIRSH) show a composition bias toward low complexity. Positions 1–23 (MASTSTTIRSHSSSRRGFSANSA) are disordered. Ala2 carries the post-translational modification N-acetylalanine. The interval 2–162 (ASTSTTIRSH…DPAIQRVRAE (161 aa)) is head. Residues 163 to 198 (EREQIKTLNNKFASFIDKVRFLEQQNKVLDTKWTLL) form a coil 1A region. The IF rod domain maps to 163–476 (EREQIKTLNN…KLLEGEECRL (314 aa)). The tract at residues 199–217 (QEQGTKTVRQNLEPLFEQY) is linker 1. Positions 218 to 309 (INNLRRQLDN…ALYDAELSQM (92 aa)) are coil 1B. The segment at 310–333 (QTHISDTSVVLSMDNNRNLDLDSI) is linker 12. The segment at 334-472 (IAEVKAQYEE…ATYRKLLEGE (139 aa)) is coil 2. Residues 473 to 564 (ECRLNGEGVG…SSSSRKSYKH (92 aa)) form a tail region. The segment at 533–564 (RATGGGLSSVGGGSSTIKYTTTSSSSRKSYKH) is disordered. Residues 534–546 (ATGGGLSSVGGGS) are compositionally biased toward gly residues. Low complexity predominate over residues 547–564 (STIKYTTTSSSSRKSYKH).

This sequence belongs to the intermediate filament family. As to quaternary structure, heterodimer of a type I and a type II keratin. KRT6 isomers associate with KRT16 and/or KRT17. In terms of tissue distribution, constitutively expressed in distinct types of epithelia such as those in oral mucosa, esophagus, papillae of tongue and hair follicle outer root sheath.

In Homo sapiens (Human), this protein is Keratin, type II cytoskeletal 6B (KRT6B).